Reading from the N-terminus, the 164-residue chain is MFHILRLESTVDLSEPLKDNGIIVFQSDKLDLEPSPNLGPTGIDNTNVNLINAKGDVLLHIGIRRRENAFVFNSIPYGESRGPEERIPLEGTFGDRRDPSITVFDHPDRYQIMIDYKTVYYYKKRLEGRCEKVSYKINEGQTPPFSDVLGVTVLYFANVMPRAN.

A Galectin domain is found at 9–154 (STVDLSEPLK…FSDVLGVTVL (146 aa)). Residues His60, Arg64, Asn73, and Glu84 each contribute to the a carbohydrate site.

In terms of assembly, homotetramer. Oligomerization is required for carbohydrate binding.

It is found in the secreted. Its subcellular location is the extracellular space. It localises to the extracellular matrix. The protein localises to the cell wall. Binds lactose. May play a role in fruiting body formation. The chain is Galectin-3 (Cgl3) from Coprinopsis cinerea (strain Okayama-7 / 130 / ATCC MYA-4618 / FGSC 9003) (Inky cap fungus).